An 81-amino-acid polypeptide reads, in one-letter code: Three-finger toxin MALT0057C (81 aa).

The first 21 residues, 1–21 (MKTLLLTLVVVTIVCLDFGHT), serve as a signal peptide directing secretion. Disulfide bonds link Cys-24/Cys-43, Cys-38/Cys-60, Cys-62/Cys-73, and Cys-74/Cys-79.

The protein belongs to the three-finger toxin family. Short-chain subfamily. Type I alpha-neurotoxin sub-subfamily. In terms of tissue distribution, expressed by the venom gland.

The protein resides in the secreted. Its function is as follows. Binds to muscle nicotinic acetylcholine receptor (nAChR) and inhibit acetylcholine from binding to the receptor, thereby impairing neuromuscular transmission. This chain is Three-finger toxin MALT0057C, found in Micrurus altirostris (Uruguayan coral snake).